The primary structure comprises 299 residues: UDP-N-acetylenolpyruvoylglucosamine reductase (299 aa).

In terms of domain architecture, FAD-binding PCMH-type spans 26 to 191 (GIGGPAKYFV…VSATFQLNAS (166 aa)). Arg170 is an active-site residue. The active-site Proton donor is Cys218. Glu288 is a catalytic residue.

Belongs to the MurB family. FAD is required as a cofactor.

It localises to the cytoplasm. It carries out the reaction UDP-N-acetyl-alpha-D-muramate + NADP(+) = UDP-N-acetyl-3-O-(1-carboxyvinyl)-alpha-D-glucosamine + NADPH + H(+). It participates in cell wall biogenesis; peptidoglycan biosynthesis. In terms of biological role, cell wall formation. The protein is UDP-N-acetylenolpyruvoylglucosamine reductase of Protochlamydia amoebophila (strain UWE25).